The primary structure comprises 389 residues: Chalcone synthase 4 (389 aa).

C164 is an active-site residue.

This sequence belongs to the thiolase-like superfamily. Chalcone/stilbene synthases family.

The catalysed reaction is (E)-4-coumaroyl-CoA + 3 malonyl-CoA + 3 H(+) = 2',4,4',6'-tetrahydroxychalcone + 3 CO2 + 4 CoA. The protein operates within secondary metabolite biosynthesis; flavonoid biosynthesis. Its function is as follows. The primary product of this enzyme is 4,2',4',6'-tetrahydroxychalcone (also termed naringenin-chalcone or chalcone) which can under specific conditions spontaneously isomerize into naringenin. In Medicago sativa (Alfalfa), this protein is Chalcone synthase 4 (CHS4).